We begin with the raw amino-acid sequence, 253 residues long: 5'-nucleotidase SurE (253 aa).

A divalent metal cation contacts are provided by Asp-8, Asp-9, Ser-40, and Asn-93.

Belongs to the SurE nucleotidase family. It depends on a divalent metal cation as a cofactor.

It localises to the cytoplasm. The catalysed reaction is a ribonucleoside 5'-phosphate + H2O = a ribonucleoside + phosphate. Functionally, nucleotidase that shows phosphatase activity on nucleoside 5'-monophosphates. This chain is 5'-nucleotidase SurE, found in Methylobacterium nodulans (strain LMG 21967 / CNCM I-2342 / ORS 2060).